The sequence spans 159 residues: Growth arrest and DNA damage-inducible protein GADD45 gamma (159 aa).

A homodimerization region spans residues 43–86 (VYESAKVLNVDPDNVTFCVLAAGEEDEGDIALQIHFTLIQAFCC).

This sequence belongs to the GADD45 family. In terms of assembly, undergoes concentration-dependent homodimerization, which is required for growth inhibititory activity and enhances interaction with PCNA. Interacts with GADD45GIP1. Interacts with PCNA.

In terms of biological role, involved in the regulation of growth and apoptosis. Mediates activation of stress-responsive MTK1/MEKK4 MAPKKK. In Homo sapiens (Human), this protein is Growth arrest and DNA damage-inducible protein GADD45 gamma (GADD45G).